A 257-amino-acid chain; its full sequence is Acetylglutamate kinase (257 aa).

Substrate is bound by residues glycine 43–glycine 44, arginine 65, and asparagine 157. ATP contacts are provided by residues aspartate 180–leucine 185 and isoleucine 208–threonine 210.

It belongs to the acetylglutamate kinase family. ArgB subfamily. In terms of assembly, homodimer.

It is found in the cytoplasm. It catalyses the reaction N-acetyl-L-glutamate + ATP = N-acetyl-L-glutamyl 5-phosphate + ADP. Its pathway is amino-acid biosynthesis; L-arginine biosynthesis; N(2)-acetyl-L-ornithine from L-glutamate: step 2/4. Functionally, catalyzes the ATP-dependent phosphorylation of N-acetyl-L-glutamate. The polypeptide is Acetylglutamate kinase (Buchnera aphidicola subsp. Acyrthosiphon pisum (strain Tuc7)).